A 218-amino-acid chain; its full sequence is Putative tRNA methyltransferase MG248 (218 aa).

It belongs to the TrmK family.

The protein resides in the cytoplasm. In Mycoplasma genitalium (strain ATCC 33530 / DSM 19775 / NCTC 10195 / G37) (Mycoplasmoides genitalium), this protein is Putative tRNA methyltransferase MG248.